Consider the following 607-residue polypeptide: UvrABC system protein C (607 aa).

Residues 15–93 (RKPGVYRMLD…IKELKPPYNI (79 aa)) enclose the GIY-YIG domain. Residues 203–238 (REVADQLSTDMEAAAAALEFEKAALLRDQLAAIQAV) form the UVR domain. The span at 542 to 551 (HRARRGKARK) shows a compositional bias: basic residues. The interval 542-561 (HRARRGKARKQSTLDEIPGI) is disordered.

This sequence belongs to the UvrC family. Interacts with UvrB in an incision complex.

The protein localises to the cytoplasm. The UvrABC repair system catalyzes the recognition and processing of DNA lesions. UvrC both incises the 5' and 3' sides of the lesion. The N-terminal half is responsible for the 3' incision and the C-terminal half is responsible for the 5' incision. This chain is UvrABC system protein C, found in Alcanivorax borkumensis (strain ATCC 700651 / DSM 11573 / NCIMB 13689 / SK2).